Consider the following 211-residue polypeptide: Protein-methionine-sulfoxide reductase heme-binding subunit MsrQ (211 aa).

A run of 5 helical transmembrane segments spans residues 10–30, 82–102, 116–136, 153–173, and 178–198; these read WLKV…VWAI, LWCF…ELGV, PYLT…FTST, FVYL…KIIS, and IYAG…LSLF.

This sequence belongs to the MsrQ family. As to quaternary structure, heterodimer of a catalytic subunit (MsrP) and a heme-binding subunit (MsrQ). It depends on FMN as a cofactor. Requires heme b as cofactor.

Its subcellular location is the cell inner membrane. In terms of biological role, part of the MsrPQ system that repairs oxidized periplasmic proteins containing methionine sulfoxide residues (Met-O), using respiratory chain electrons. Thus protects these proteins from oxidative-stress damage caused by reactive species of oxygen and chlorine generated by the host defense mechanisms. MsrPQ is essential for the maintenance of envelope integrity under bleach stress, rescuing a wide series of structurally unrelated periplasmic proteins from methionine oxidation, including the primary periplasmic chaperone SurA and the lipoprotein Pal. MsrQ provides electrons for reduction to the reductase catalytic subunit MsrP, using the quinone pool of the respiratory chain. The polypeptide is Protein-methionine-sulfoxide reductase heme-binding subunit MsrQ (Escherichia coli (strain 55989 / EAEC)).